A 195-amino-acid chain; its full sequence is Proline-rich protein 3 (195 aa).

The signal sequence occupies residues 1 to 29 (MKMNFFNSFPQYGVYILGLNLLLCGVSEG).

Component of the acid-insoluble organic matrix of calcified layers of the shell (at protein level).

Its subcellular location is the secreted. In Lottia gigantea (Giant owl limpet), this protein is Proline-rich protein 3.